The sequence spans 310 residues: Quinolinate synthase (310 aa).

Iminosuccinate contacts are provided by H27 and S44. Residue C89 participates in [4Fe-4S] cluster binding. Residues 115–117 (YVN) and S132 contribute to the iminosuccinate site. C175 contacts [4Fe-4S] cluster. Residues 201-203 (HPE) and T222 each bind iminosuccinate. Position 267 (C267) interacts with [4Fe-4S] cluster.

It belongs to the quinolinate synthase family. Type 2 subfamily. It depends on [4Fe-4S] cluster as a cofactor.

It is found in the cytoplasm. The catalysed reaction is iminosuccinate + dihydroxyacetone phosphate = quinolinate + phosphate + 2 H2O + H(+). It functions in the pathway cofactor biosynthesis; NAD(+) biosynthesis; quinolinate from iminoaspartate: step 1/1. In terms of biological role, catalyzes the condensation of iminoaspartate with dihydroxyacetone phosphate to form quinolinate. The sequence is that of Quinolinate synthase from Thermus thermophilus (strain ATCC BAA-163 / DSM 7039 / HB27).